The chain runs to 236 residues: tRNA (guanine-N(1)-)-methyltransferase (236 aa).

S-adenosyl-L-methionine-binding positions include G110 and 129–134 (LGDFVL).

This sequence belongs to the RNA methyltransferase TrmD family. In terms of assembly, homodimer.

It is found in the cytoplasm. It carries out the reaction guanosine(37) in tRNA + S-adenosyl-L-methionine = N(1)-methylguanosine(37) in tRNA + S-adenosyl-L-homocysteine + H(+). Functionally, specifically methylates guanosine-37 in various tRNAs. This chain is tRNA (guanine-N(1)-)-methyltransferase, found in Clostridium perfringens (strain SM101 / Type A).